We begin with the raw amino-acid sequence, 1114 residues long: M-phase phosphoprotein 9 (1114 aa).

Disordered regions lie at residues 1–55 (MEDF…KTGP), 106–161 (RPSC…DCHV), 183–207 (AKEPTEPLEPGAASQGQHPASVVQA), 267–301 (TSWAQRLKQNQSKQAHTEDDCSGPKPGSELNWKPP), and 410–468 (VLEP…STIP). Over residues 24–51 (APQSLGLSLHANRSSPHLSTNGVSSFSG) the composition is skewed to polar residues. The span at 106 to 119 (RPSCSSSSVSEQVS) shows a compositional bias: low complexity. The segment covering 149–161 (QPASSTSYPDCHV) has biased composition (polar residues). Polar residues-rich tracts occupy residues 267–280 (TSWAQRLKQNQSKQ) and 429–446 (HNPSQVSGFSKYPSTTRA). The interval 368 to 729 (LSQVLTLDPG…EAQVKQAEHE (362 aa)) is required for its centrosomal localization. The tract at residues 382–431 (KPKEHVAGIQAHGFLHALDDRISFSPDSVLEPSLSRHSDTDSSSQASHNP) is interaction with CEP97. A coiled-coil region spans residues 574 to 733 (DRCGQLDSAL…KQAEHESMLS (160 aa)). S710 is modified (phosphoserine; by TTBK2). K713 participates in a covalent cross-link: Glycyl lysine isopeptide (Lys-Gly) (interchain with G-Cter in ubiquitin). S717 carries the phosphoserine; by TTBK2 modification. Disordered regions lie at residues 727–755 (EHESMLSLRNGAKVPERPSRSNSVATSDV), 840–931 (SWGT…GFSH), and 975–1002 (EEKKYSEKNSDDPVNPSSCPEHSPNGLK). Residues 730 to 963 (SMLSLRNGAK…PVSTLQQTTA (234 aa)) are interaction with KIF24. Residues 852 to 868 (SKLVNSRQTEPSVNTGR) are compositionally biased toward polar residues. Residues 881–898 (QTSASQRSSSLPPSSRKA) are compositionally biased toward low complexity. S926 is modified (phosphoserine). Over residues 975-985 (EEKKYSEKNSD) the composition is skewed to basic and acidic residues. Residues 1040–1105 (RTLAETERFF…GSVRMTLKKF (66 aa)) adopt a coiled-coil conformation.

As to quaternary structure, interacts with CCP110, CEP97 and KIF24. In terms of processing, TTBK2-mediated phosphorylation at Ser-710 and Ser-717, promotes its ubiquitination at Lys-713 leading to proteasomal degradation, loss of MPHOSPH9 facilitates the removal of the CP110-CEP97 complex from the mother centrioles, promoting the initiation of ciliogenesis. Phosphorylated in M (mitotic) phase. Ubiquitinated at Lys-713, leading to proteasomal degradation.

The protein localises to the cytoplasm. It is found in the cytoskeleton. It localises to the microtubule organizing center. Its subcellular location is the centrosome. The protein resides in the centriole. The protein localises to the golgi apparatus membrane. Functionally, negatively regulates cilia formation by recruiting the CP110-CEP97 complex (a negative regulator of ciliogenesis) at the distal end of the mother centriole in ciliary cells. At the beginning of cilia formation, MPHOSPH9 undergoes TTBK2-mediated phosphorylation and degradation via the ubiquitin-proteasome system and removes itself and the CP110-CEP97 complex from the distal end of the mother centriole, which subsequently promotes cilia formation. The protein is M-phase phosphoprotein 9 (Mphosph9) of Mus musculus (Mouse).